The following is a 451-amino-acid chain: MPGMMEKGPELLGKSRSANGGAKSPAGGGGSSANGGLHFSEPESGCSSDDEHGDVGMRVGAEYQARIPEFDPGATKYTDKDNGGMLVWSPYHSIPDAKLDEYIAIAKEKHGYNVEQALGMLFWHKHNIEKSLADLPNFTPFPDEWTVEDKVLFEQAFSFHGKSFHRIQQMLPDKTIASLVKYYYSWKKTRSRTSLMDRQARKLANRHNQGDSDDDVEEAHPMDGNDSDYDPKKEAKREGNADQPVQTSKIGLGRREYQSLQHRHHSQRSKCRPPKGMYLTQEDVVAVSCSPNAANTILRQLDMELISLKRQVQNAKQVNSALKQKMEGGIEEFKPPEAQTPQAPRTLGPSPPAPSSTPTPTVPIATLNQPPPLLRPTLPAAPALHRQPPPLQQQARFIQPRPTLNQPPPPLIRPANSMPPRLNPRPVLTTVGGQQPPSLIGIQTDSQPSLH.

The tract at residues 1–55 is disordered; the sequence is MPGMMEKGPELLGKSRSANGGAKSPAGGGGSSANGGLHFSEPESGCSSDDEHGDV. An ELM2 domain is found at 55–139; that stretch reads VGMRVGAEYQ…KSLADLPNFT (85 aa). Residue Lys-76 forms a Glycyl lysine isopeptide (Lys-Gly) (interchain with G-Cter in SUMO2) linkage. The 52-residue stretch at 140–191 folds into the SANT domain; it reads PFPDEWTVEDKVLFEQAFSFHGKSFHRIQQMLPDKTIASLVKYYYSWKKTRS. A disordered region spans residues 204 to 275; sequence ANRHNQGDSD…SQRSKCRPPK (72 aa). Phosphoserine is present on residues Ser-212 and Ser-227. Positions 218 to 240 are enriched in basic and acidic residues; sequence EAHPMDGNDSDYDPKKEAKREGN. Lys-249 is covalently cross-linked (Glycyl lysine isopeptide (Lys-Gly) (interchain with G-Cter in SUMO2)). Residues 261-273 are compositionally biased toward basic residues; it reads QHRHHSQRSKCRP. The stretch at 293-329 forms a coiled coil; it reads AANTILRQLDMELISLKRQVQNAKQVNSALKQKMEGG. The interval 333 to 451 is disordered; sequence FKPPEAQTPQ…IQTDSQPSLH (119 aa). Over residues 349-361 the composition is skewed to pro residues; sequence PSPPAPSSTPTPT. Residues 375 to 384 are compositionally biased toward low complexity; sequence RPTLPAAPAL. Asymmetric dimethylarginine occurs at positions 401 and 413. Residues 431–451 are compositionally biased toward polar residues; that stretch reads VGGQQPPSLIGIQTDSQPSLH.

This sequence belongs to the CoREST family.

The protein localises to the nucleus. May act as a component of a corepressor complex that represses transcription. The protein is REST corepressor 3 (Rcor3) of Mus musculus (Mouse).